Here is a 417-residue protein sequence, read N- to C-terminus: Tol-Pal system protein TolB (417 aa).

Positions 1 to 16 are cleaved as a signal peptide; it reads MKYLWLFLIYAIGLFA.

The protein belongs to the TolB family. In terms of assembly, the Tol-Pal system is composed of five core proteins: the inner membrane proteins TolA, TolQ and TolR, the periplasmic protein TolB and the outer membrane protein Pal. They form a network linking the inner and outer membranes and the peptidoglycan layer.

It is found in the periplasm. Its function is as follows. Part of the Tol-Pal system, which plays a role in outer membrane invagination during cell division and is important for maintaining outer membrane integrity. This chain is Tol-Pal system protein TolB, found in Helicobacter pylori (strain J99 / ATCC 700824) (Campylobacter pylori J99).